The primary structure comprises 399 residues: Tryptophan synthase beta chain (399 aa).

N6-(pyridoxal phosphate)lysine is present on K91.

It belongs to the TrpB family. Tetramer of two alpha and two beta chains. The cofactor is pyridoxal 5'-phosphate.

It catalyses the reaction (1S,2R)-1-C-(indol-3-yl)glycerol 3-phosphate + L-serine = D-glyceraldehyde 3-phosphate + L-tryptophan + H2O. The protein operates within amino-acid biosynthesis; L-tryptophan biosynthesis; L-tryptophan from chorismate: step 5/5. The beta subunit is responsible for the synthesis of L-tryptophan from indole and L-serine. The protein is Tryptophan synthase beta chain of Shouchella clausii (strain KSM-K16) (Alkalihalobacillus clausii).